We begin with the raw amino-acid sequence, 276 residues long: Rhomboid-type serine protease 2 (276 aa).

A run of 5 helical transmembrane segments spans residues 27 to 47, 77 to 97, 109 to 129, 132 to 152, and 175 to 195; these read LPLF…LTLV, FPFI…FTPL, TSVA…YVFV, FILH…LLLG, and WITP…SSFL. The active-site Nucleophile is Ser144. The active site involves His197. A helical membrane pass occupies residues 198–218; that stretch reads LAGLLVGYGFGLGYLKFLAPP.

Belongs to the peptidase S54 family.

It localises to the golgi apparatus membrane. The protein localises to the golgi apparatus. Its subcellular location is the cis-Golgi network membrane. It catalyses the reaction Cleaves type-1 transmembrane domains using a catalytic dyad composed of serine and histidine that are contributed by different transmembrane domains.. Probable rhomboid-type serine protease that catalyzes intramembrane proteolysis. The protein is Rhomboid-type serine protease 2 (rbd-2) of Neurospora crassa (strain ATCC 24698 / 74-OR23-1A / CBS 708.71 / DSM 1257 / FGSC 987).